The sequence spans 59 residues: Large ribosomal subunit protein bL32C (59 aa).

Belongs to the bacterial ribosomal protein bL32 family.

This Enterococcus faecalis (strain ATCC 700802 / V583) protein is Large ribosomal subunit protein bL32C (rpmF3).